Consider the following 833-residue polypeptide: Leucine--tRNA ligase (833 aa).

The 'HIGH' region motif lies at 41–52; the sequence is PYPSGAGLHVGH. A 'KMSKS' region motif is present at residues 610–614; it reads KMSKS. An ATP-binding site is contributed by Lys613.

This sequence belongs to the class-I aminoacyl-tRNA synthetase family.

The protein localises to the cytoplasm. The enzyme catalyses tRNA(Leu) + L-leucine + ATP = L-leucyl-tRNA(Leu) + AMP + diphosphate. The chain is Leucine--tRNA ligase from Streptococcus pyogenes serotype M6 (strain ATCC BAA-946 / MGAS10394).